A 230-amino-acid polypeptide reads, in one-letter code: MNYEGKTKIVKVTGDYALLEFKDDITAGDGLKHDVLTGKGSICAETTAILMKYLSEKDIKTHLVEYIPPRTLKVIPLKMFPLEVVVRLKKAGSFVRRYGGAEGEDLPVPLVEFFIKDDERHDPMVCVDHLEILGIATKKQAEKMKEAAVKITLALKEFFERANFELWDIKYEFGLDKDGNVVLGDEISPDTFRLRNKGEIFDKDVYRRDLGDPLKKYREVLELCRSLNSQ.

It belongs to the SAICAR synthetase family.

It catalyses the reaction 5-amino-1-(5-phospho-D-ribosyl)imidazole-4-carboxylate + L-aspartate + ATP = (2S)-2-[5-amino-1-(5-phospho-beta-D-ribosyl)imidazole-4-carboxamido]succinate + ADP + phosphate + 2 H(+). It functions in the pathway purine metabolism; IMP biosynthesis via de novo pathway; 5-amino-1-(5-phospho-D-ribosyl)imidazole-4-carboxamide from 5-amino-1-(5-phospho-D-ribosyl)imidazole-4-carboxylate: step 1/2. The polypeptide is Phosphoribosylaminoimidazole-succinocarboxamide synthase (Thermotoga sp. (strain RQ2)).